The following is a 268-amino-acid chain: tRNA (guanine-N(1)-)-methyltransferase (268 aa).

S-adenosyl-L-methionine-binding positions include Gly-110 and 129-134; that span reads IGDFVM. The tract at residues 246 to 268 is disordered; sequence WGAPPAPVKRHRKRRPETTESAS.

Belongs to the RNA methyltransferase TrmD family. As to quaternary structure, homodimer.

It is found in the cytoplasm. It carries out the reaction guanosine(37) in tRNA + S-adenosyl-L-methionine = N(1)-methylguanosine(37) in tRNA + S-adenosyl-L-homocysteine + H(+). In terms of biological role, specifically methylates guanosine-37 in various tRNAs. This Deinococcus deserti (strain DSM 17065 / CIP 109153 / LMG 22923 / VCD115) protein is tRNA (guanine-N(1)-)-methyltransferase.